The following is a 401-amino-acid chain: NAD(P)H-quinone oxidoreductase subunit H, chloroplastic (401 aa).

This sequence belongs to the complex I 49 kDa subunit family. NDH is composed of at least 16 different subunits, 5 of which are encoded in the nucleus.

The protein localises to the plastid. It is found in the chloroplast thylakoid membrane. It catalyses the reaction a plastoquinone + NADH + (n+1) H(+)(in) = a plastoquinol + NAD(+) + n H(+)(out). The catalysed reaction is a plastoquinone + NADPH + (n+1) H(+)(in) = a plastoquinol + NADP(+) + n H(+)(out). In terms of biological role, NDH shuttles electrons from NAD(P)H:plastoquinone, via FMN and iron-sulfur (Fe-S) centers, to quinones in the photosynthetic chain and possibly in a chloroplast respiratory chain. The immediate electron acceptor for the enzyme in this species is believed to be plastoquinone. Couples the redox reaction to proton translocation, and thus conserves the redox energy in a proton gradient. This is NAD(P)H-quinone oxidoreductase subunit H, chloroplastic from Aethionema cordifolium (Lebanon stonecress).